The following is a 28-amino-acid chain: Cytochrome c oxidase subunit 5B, mitochondrial (28 aa).

The protein belongs to the cytochrome c oxidase subunit 5B family. In terms of assembly, component of the cytochrome c oxidase (complex IV, CIV), a multisubunit enzyme composed of a catalytic core of 3 subunits and several supernumerary subunits. The complex exists as a monomer or a dimer and forms supercomplexes (SCs) in the inner mitochondrial membrane with ubiquinol-cytochrome c oxidoreductase (cytochrome b-c1 complex, complex III, CIII).

It is found in the mitochondrion inner membrane. The protein operates within energy metabolism; oxidative phosphorylation. Component of the cytochrome c oxidase, the last enzyme in the mitochondrial electron transport chain which drives oxidative phosphorylation. The respiratory chain contains 3 multisubunit complexes succinate dehydrogenase (complex II, CII), ubiquinol-cytochrome c oxidoreductase (cytochrome b-c1 complex, complex III, CIII) and cytochrome c oxidase (complex IV, CIV), that cooperate to transfer electrons derived from NADH and succinate to molecular oxygen, creating an electrochemical gradient over the inner membrane that drives transmembrane transport and the ATP synthase. Cytochrome c oxidase is the component of the respiratory chain that catalyzes the reduction of oxygen to water. Electrons originating from reduced cytochrome c in the intermembrane space (IMS) are transferred via the dinuclear copper A center (CU(A)) of subunit 2 and heme A of subunit 1 to the active site in subunit 1, a binuclear center (BNC) formed by heme A3 and copper B (CU(B)). The BNC reduces molecular oxygen to 2 water molecules using 4 electrons from cytochrome c in the IMS and 4 protons from the mitochondrial matrix. The polypeptide is Cytochrome c oxidase subunit 5B, mitochondrial (Solanum tuberosum (Potato)).